The primary structure comprises 328 residues: MYKLQAKRVKAAAGQMWNSNFSKIRQSLKNAYHKCKNQYPNSTRCPTMTSHDCDQEDLNADEEMNLLVMLQDIKTTQLELLSQMTGMICALSKIQEKTDFFQKQMQVLETKMNVNENKQCATAEDIFSVKEDVDALKKKVTELGNQNSCSNVHCLEVLDGEKGKEILELLHKVTQSETLKNTLTSIDSEISSAEPEKVLSYPKSTDHLEEKTISPQIKALEKSNYQNALRSFQKAKSNIYIYPDFNTWIKLTFVHGGKWRFFLSATKLEEFIQWLLSRPTLPPEEPQVITQKYCLFTGPITNLTTICVSVFNYIYCLFGSSKEEVTRL.

Residues 93–148 (KIQEKTDFFQKQMQVLETKMNVNENKQCATAEDIFSVKEDVDALKKKVTELGNQNS) are a coiled coil. Residue threonine 182 is modified to Phosphothreonine.

The protein is Coiled-coil domain-containing protein 54 (CCDC54) of Bos taurus (Bovine).